The following is a 356-amino-acid chain: Heme A synthase (356 aa).

The next 5 helical transmembrane spans lie at 23 to 43 (IAIW…VGGV), 105 to 125 (FHRL…LYFL), 141 to 161 (IFLL…SGLV), 173 to 193 (AHLG…LDLL), and 212 to 232 (STML…VAGI). H274 lines the heme pocket. A run of 3 helical transmembrane segments spans residues 276-296 (LIAW…RAVP), 307-327 (LLLI…LLVV), and 329-349 (LTLA…ALWV). H335 provides a ligand contact to heme.

The protein belongs to the COX15/CtaA family. Type 2 subfamily. Interacts with CtaB. The cofactor is heme b.

Its subcellular location is the cell membrane. It catalyses the reaction Fe(II)-heme o + 2 A + H2O = Fe(II)-heme a + 2 AH2. It participates in porphyrin-containing compound metabolism; heme A biosynthesis; heme A from heme O: step 1/1. Functionally, catalyzes the conversion of heme O to heme A by two successive hydroxylations of the methyl group at C8. The first hydroxylation forms heme I, the second hydroxylation results in an unstable dihydroxymethyl group, which spontaneously dehydrates, resulting in the formyl group of heme A. The protein is Heme A synthase of Nitrosospira multiformis (strain ATCC 25196 / NCIMB 11849 / C 71).